The following is an 829-amino-acid chain: Periplasmic nitrate reductase (829 aa).

Residues 1 to 27 (MNRRDFMKANAVIAAASAAGLALPAGA) constitute a signal peptide (tat-type signal). The 57-residue stretch at 39 to 95 (LEWNKAPCRFCGTGCSVMVATREGKVVATHGDANSEVNRGLSCIKGYFLSKIMYGRD) folds into the 4Fe-4S Mo/W bis-MGD-type domain. Residues Cys-46, Cys-49, Cys-53, and Cys-81 each coordinate [4Fe-4S] cluster. Mo-bis(molybdopterin guanine dinucleotide)-binding positions include Lys-83, Gln-150, Asn-175, Cys-179, 212-219 (WGSNMAEM), 243-247 (STFEH), 262-264 (QTD), Met-373, Gln-377, Asn-483, 509-510 (SD), Lys-532, Asp-559, and 719-728 (TGRVLEHWHS). Substrate is bound at residue Trp-795. Mo-bis(molybdopterin guanine dinucleotide) is bound by residues Asn-803 and Lys-820.

The protein belongs to the prokaryotic molybdopterin-containing oxidoreductase family. NasA/NapA/NarB subfamily. In terms of assembly, component of the periplasmic nitrate reductase NapAB complex composed of NapA and NapB. It depends on [4Fe-4S] cluster as a cofactor. The cofactor is Mo-bis(molybdopterin guanine dinucleotide). Post-translationally, predicted to be exported by the Tat system. The position of the signal peptide cleavage has not been experimentally proven.

The protein localises to the periplasm. The enzyme catalyses 2 Fe(II)-[cytochrome] + nitrate + 2 H(+) = 2 Fe(III)-[cytochrome] + nitrite + H2O. Catalytic subunit of the periplasmic nitrate reductase complex NapAB. Receives electrons from NapB and catalyzes the reduction of nitrate to nitrite. The sequence is that of Periplasmic nitrate reductase from Shewanella denitrificans (strain OS217 / ATCC BAA-1090 / DSM 15013).